Here is a 388-residue protein sequence, read N- to C-terminus: Mitochondrial distribution and morphology protein 12 (388 aa).

Residues 1–388 enclose the SMP-LTD domain; the sequence is MSLDINWSLL…VFPNFHTVAL (388 aa). Disordered stretches follow at residues 75–101 and 209–251; these read DDEGDFAEEEKQREKEREERDKLRNEA and PMSI…SSSS. The segment covering 83–101 has biased composition (basic and acidic residues); it reads EEKQREKEREERDKLRNEA. Pro residues predominate over residues 234–243; sequence PSPPAHPAGL.

This sequence belongs to the MDM12 family. Component of the ER-mitochondria encounter structure (ERMES) or MDM complex, composed of MMM1, MDM10, MDM12 and MDM34. An MMM1 homodimer associates with one molecule of MDM12 on each side in a pairwise head-to-tail manner, and the SMP-LTD domains of MMM1 and MDM12 generate a continuous hydrophobic tunnel for phospholipid trafficking.

Its subcellular location is the mitochondrion outer membrane. It is found in the endoplasmic reticulum membrane. Component of the ERMES/MDM complex, which serves as a molecular tether to connect the endoplasmic reticulum (ER) and mitochondria. Components of this complex are involved in the control of mitochondrial shape and protein biogenesis, and function in nonvesicular lipid trafficking between the ER and mitochondria. MDM12 is required for the interaction of the ER-resident membrane protein MMM1 and the outer mitochondrial membrane-resident beta-barrel protein MDM10. The MDM12-MMM1 subcomplex functions in the major beta-barrel assembly pathway that is responsible for biogenesis of all mitochondrial outer membrane beta-barrel proteins, and acts in a late step after the SAM complex. The MDM10-MDM12-MMM1 subcomplex further acts in the TOM40-specific pathway after the action of the MDM12-MMM1 complex. Essential for establishing and maintaining the structure of mitochondria and maintenance of mtDNA nucleoids. This chain is Mitochondrial distribution and morphology protein 12, found in Cryptococcus neoformans var. neoformans serotype D (strain B-3501A) (Filobasidiella neoformans).